We begin with the raw amino-acid sequence, 303 residues long: Putative S-adenosyl-L-methionine-dependent methyltransferase MSMEG_1479/MSMEI_1443 (303 aa).

Residues D130 and 159–160 contribute to the S-adenosyl-L-methionine site; that span reads DL.

The protein belongs to the UPF0677 family.

In terms of biological role, exhibits S-adenosyl-L-methionine-dependent methyltransferase activity. This is Putative S-adenosyl-L-methionine-dependent methyltransferase MSMEG_1479/MSMEI_1443 from Mycolicibacterium smegmatis (strain ATCC 700084 / mc(2)155) (Mycobacterium smegmatis).